The sequence spans 233 residues: Putative N-acetylmannosamine-6-phosphate 2-epimerase (233 aa).

Belongs to the NanE family.

It catalyses the reaction an N-acyl-D-glucosamine 6-phosphate = an N-acyl-D-mannosamine 6-phosphate. The protein operates within amino-sugar metabolism; N-acetylneuraminate degradation; D-fructose 6-phosphate from N-acetylneuraminate: step 3/5. Functionally, converts N-acetylmannosamine-6-phosphate (ManNAc-6-P) to N-acetylglucosamine-6-phosphate (GlcNAc-6-P). The chain is Putative N-acetylmannosamine-6-phosphate 2-epimerase from Yersinia pseudotuberculosis serotype O:3 (strain YPIII).